The chain runs to 555 residues: CTP synthase (555 aa).

The tract at residues 1–265 (MTRYIFITGG…GNRVCEKLNI (265 aa)) is amidoligase domain. Ser-13 contacts CTP. Ser-13 is a binding site for UTP. ATP-binding positions include 14-19 (SLGKGI) and Asp-71. Mg(2+) contacts are provided by Asp-71 and Glu-139. CTP is bound by residues 146 to 148 (DIE), 186 to 191 (KTKPTQ), and Lys-222. UTP-binding positions include 186–191 (KTKPTQ) and Lys-222. One can recognise a Glutamine amidotransferase type-1 domain in the interval 290–541 (TVAVVGKYVD…IKAGLAAKEA (252 aa)). Gly-351 provides a ligand contact to L-glutamine. Cys-378 (nucleophile; for glutamine hydrolysis) is an active-site residue. L-glutamine-binding positions include 379 to 382 (LGMQ), Glu-402, and Arg-469. Residues His-514 and Glu-516 contribute to the active site.

Belongs to the CTP synthase family. In terms of assembly, homotetramer.

The enzyme catalyses UTP + L-glutamine + ATP + H2O = CTP + L-glutamate + ADP + phosphate + 2 H(+). It catalyses the reaction L-glutamine + H2O = L-glutamate + NH4(+). It carries out the reaction UTP + NH4(+) + ATP = CTP + ADP + phosphate + 2 H(+). It functions in the pathway pyrimidine metabolism; CTP biosynthesis via de novo pathway; CTP from UDP: step 2/2. With respect to regulation, allosterically activated by GTP, when glutamine is the substrate; GTP has no effect on the reaction when ammonia is the substrate. The allosteric effector GTP functions by stabilizing the protein conformation that binds the tetrahedral intermediate(s) formed during glutamine hydrolysis. Inhibited by the product CTP, via allosteric rather than competitive inhibition. Catalyzes the ATP-dependent amination of UTP to CTP with either L-glutamine or ammonia as the source of nitrogen. Regulates intracellular CTP levels through interactions with the four ribonucleotide triphosphates. This is CTP synthase from Coxiella burnetii (strain RSA 331 / Henzerling II).